Consider the following 179-residue polypeptide: Ribosome maturation factor RimM (179 aa).

The 80-residue stretch at 96 to 175 (KDEYFWFDIE…IITVIGAMDI (80 aa)) folds into the PRC barrel domain.

It belongs to the RimM family. Binds ribosomal protein uS19.

It localises to the cytoplasm. Functionally, an accessory protein needed during the final step in the assembly of 30S ribosomal subunit, possibly for assembly of the head region. Essential for efficient processing of 16S rRNA. May be needed both before and after RbfA during the maturation of 16S rRNA. It has affinity for free ribosomal 30S subunits but not for 70S ribosomes. The polypeptide is Ribosome maturation factor RimM (Sulfurimonas denitrificans (strain ATCC 33889 / DSM 1251) (Thiomicrospira denitrificans (strain ATCC 33889 / DSM 1251))).